We begin with the raw amino-acid sequence, 139 residues long: D-ribose pyranase (139 aa).

The active-site Proton donor is the H20. Substrate-binding positions include D28, H106, and 128–130 (YAN).

It belongs to the RbsD / FucU family. RbsD subfamily. In terms of assembly, homodecamer.

The protein localises to the cytoplasm. The catalysed reaction is beta-D-ribopyranose = beta-D-ribofuranose. It participates in carbohydrate metabolism; D-ribose degradation; D-ribose 5-phosphate from beta-D-ribopyranose: step 1/2. Catalyzes the interconversion of beta-pyran and beta-furan forms of D-ribose. The protein is D-ribose pyranase of Haemophilus influenzae (strain PittGG).